The sequence spans 494 residues: Amidophosphoribosyltransferase (494 aa).

The propeptide occupies 1 to 10; the sequence is MFNYSGLNEE. Cysteine 11 serves as the catalytic Nucleophile. Positions 11–231 constitute a Glutamine amidotransferase type-2 domain; the sequence is CGVFGIWNHP…AGEYVVINDK (221 aa). Mg(2+) contacts are provided by serine 294, aspartate 356, and aspartate 357.

The protein in the C-terminal section; belongs to the purine/pyrimidine phosphoribosyltransferase family. Requires Mg(2+) as cofactor.

It catalyses the reaction 5-phospho-beta-D-ribosylamine + L-glutamate + diphosphate = 5-phospho-alpha-D-ribose 1-diphosphate + L-glutamine + H2O. It functions in the pathway purine metabolism; IMP biosynthesis via de novo pathway; N(1)-(5-phospho-D-ribosyl)glycinamide from 5-phospho-alpha-D-ribose 1-diphosphate: step 1/2. In terms of biological role, catalyzes the formation of phosphoribosylamine from phosphoribosylpyrophosphate (PRPP) and glutamine. The sequence is that of Amidophosphoribosyltransferase from Staphylococcus aureus (strain Mu50 / ATCC 700699).